The following is a 243-amino-acid chain: Mannosyl-3-phosphoglycerate phosphatase (243 aa).

Aspartate 8 acts as the Nucleophile in catalysis. Mg(2+)-binding residues include aspartate 8, aspartate 10, serine 169, and aspartate 204.

The protein belongs to the HAD-like hydrolase superfamily. MPGP family. Requires Mg(2+) as cofactor.

It is found in the cytoplasm. The catalysed reaction is 2-O-(alpha-D-mannosyl)-3-phosphoglycerate + H2O = (2R)-2-O-(alpha-D-mannosyl)-glycerate + phosphate. The protein operates within carbohydrate biosynthesis; 2-(alpha-D-mannosyl)-D-glycerate biosynthesis; 2-(alpha-D-mannosyl)-D-glycerate from GDP-alpha-D-mannose (MPG route): step 2/2. Its function is as follows. Hydrolyzes mannosyl-3-phosphoglycerate (MPG) to form the osmolyte mannosylglycerate (MG). The enzyme is absolutely specific for MPG. In Pyrococcus horikoshii (strain ATCC 700860 / DSM 12428 / JCM 9974 / NBRC 100139 / OT-3), this protein is Mannosyl-3-phosphoglycerate phosphatase.